Here is a 280-residue protein sequence, read N- to C-terminus: Energy-coupling factor transporter ATP-binding protein EcfA1 (280 aa).

The 236-residue stretch at 6–241 (LRTENISFQY…SHMLQEIGLD (236 aa)) folds into the ABC transporter domain. Position 40–47 (40–47 (GQNGSGKS)) interacts with ATP.

Belongs to the ABC transporter superfamily. Energy-coupling factor EcfA family. Forms a stable energy-coupling factor (ECF) transporter complex composed of 2 membrane-embedded substrate-binding proteins (S component), 2 ATP-binding proteins (A component) and 2 transmembrane proteins (T component).

It localises to the cell membrane. In terms of biological role, ATP-binding (A) component of a common energy-coupling factor (ECF) ABC-transporter complex. Unlike classic ABC transporters this ECF transporter provides the energy necessary to transport a number of different substrates. The chain is Energy-coupling factor transporter ATP-binding protein EcfA1 from Bacillus thuringiensis subsp. konkukian (strain 97-27).